The chain runs to 652 residues: Sciellin (652 aa).

Residues 1 to 10 (MSNFSSRKKS) show a composition bias toward basic residues. Disordered regions lie at residues 1–29 (MSNFSSRKKSPTGNDLKSARGAELRQQGF) and 43–180 (SWIK…KPLG). The segment covering 66–95 (NSHDALDRKLIERDEPKATISRYRSEDMLD) has biased composition (basic and acidic residues). Lys82 carries the post-translational modification N6-acetyllysine. A compositionally biased stretch (polar residues) spans 97-110 (TLSSFRTPQSTKTP). Low complexity predominate over residues 111-130 (AVSSFNANTTATASTPATTP). Residues 161–170 (LHPPLPPKPC) are compositionally biased toward pro residues. 15 repeat units span residues 207 to 226 (TEDLDDIIRVAAALQKTDKG), 227 to 241 (EELDNLIRMNKSLNR), 242 to 261 (NQGLDGLFRANLKAQQLDKR), 262 to 281 (AQSLESLIYMNTQTDRDGKG), 282 to 301 (NQAFGSLKKINQRADPDRRS), 302 to 320 (QDLRSVIRTHATAERIGRR), 321 to 340 (KQDLDGLIKVNPDTNKNMKR), 341 to 360 (GKSLDNLIKVTPEVNRSNKG), 361 to 380 (GPSLDNFTKGVPARSRANQR), 381 to 398 (DQDLDSLIKVTPSANRSS), 399 to 418 (QHSLDELINTSPQTIKTTAR), 419 to 438 (HQDLDKFIKVNPDVLTNNQR), 439 to 458 (NHDVDSTIRGNPTGTRCEQS), 459 to 477 (EELDNLIKVKPSALRNTNG), and 478 to 496 (GQDLESLTEVNSHVAEKNG). Residues 207–496 (TEDLDDIIRV…VNSHVAEKNG (290 aa)) are 15 X approximate tandem repeats. Ser264 carries the phosphoserine modification. Ser343 carries the phosphoserine modification. Residues 353 to 385 (EVNRSNKGGPSLDNFTKGVPARSRANQRDQDLD) form a disordered region. The interval 436–455 (NQRNHDVDSTIRGNPTGTRC) is disordered. Residues 446 to 455 (IRGNPTGTRC) are compositionally biased toward polar residues. The LIM zinc-binding domain occupies 583–649 (DMCTYCRKPL…EPCYSKVMAK (67 aa)).

Expressed in the upper layers of stratified epithelia, including, ependyma and choroid plexus of the brain ventricles.

Its subcellular location is the cytoplasm. It localises to the membrane. Functionally, may function in the assembly or regulation of proteins in the cornified envelope. The LIM domain may be involved in homotypic or heterotypic associations and may function to localize sciellin to the cornified envelope. This chain is Sciellin (Scel), found in Mus musculus (Mouse).